We begin with the raw amino-acid sequence, 430 residues long: Glutamine synthetase, chloroplastic/mitochondrial (430 aa).

A chloroplast and mitochondrion-targeting transit peptide spans 1-45; it reads MAQILAASPTCQMRVPKHSSVIASSSKLWSSVVLKQKKQSNNKVR. The GS beta-grasp domain occupies 77–157; it reads IIAEYIWIGG…VICDTWTPAG (81 aa). The tract at residues 97 to 122 is disordered; the sequence is TIEKPVEDPSELPKWNYDGSSTGQAP. The residue at position 106 (Ser-106) is a Phosphoserine. The region spanning 161–430 is the GS catalytic domain; that stretch reads PTNKRAKAAE…LAAQKLSLNV (270 aa).

This sequence belongs to the glutamine synthetase family. In terms of assembly, homooctamer. In terms of tissue distribution, expressed in mesophyll and epidermal cells of leaves.

The protein localises to the plastid. The protein resides in the chloroplast. It is found in the mitochondrion. The enzyme catalyses L-glutamate + NH4(+) + ATP = L-glutamine + ADP + phosphate + H(+). Its function is as follows. The light-modulated chloroplast/mitochondrial enzyme, encoded by a nuclear gene and expressed primarily in leaves, is responsible for the reassimilation of the ammonia generated by photorespiration. This Arabidopsis thaliana (Mouse-ear cress) protein is Glutamine synthetase, chloroplastic/mitochondrial (GLN2).